Consider the following 843-residue polypeptide: Structure-specific endonuclease subunit SLX4 (843 aa).

Disordered stretches follow at residues 26-111, 281-313, 339-377, 603-655, and 729-748; these read SPPS…KTTT, AIPT…QKGK, NVAP…NGPP, SKTF…AKAL, and ATPN…FSIE. Composition is skewed to polar residues over residues 50–69 and 285–301; these read ASFS…NGEN and PTES…SSKQ. The segment covering 302–311 has biased composition (basic residues); sequence QRVKAKKPQK. 2 stretches are compositionally biased toward polar residues: residues 349–372 and 603–616; these read NISN…TLKN and SKTF…NQGT. The segment covering 617–636 has biased composition (basic and acidic residues); it reads DDARKNGFRKENHSDVRVRP. Over residues 739 to 748 the composition is skewed to low complexity; the sequence is RSSSTSFSIE.

This sequence belongs to the SLX4 family. Forms a heterodimer with SLX1. In terms of processing, phosphorylated in response to DNA damage.

Its subcellular location is the nucleus. Its function is as follows. Regulatory subunit of the SLX1-SLX4 structure-specific endonuclease that resolves DNA secondary structures generated during DNA repair and recombination. Has endonuclease activity towards branched DNA substrates, introducing single-strand cuts in duplex DNA close to junctions with ss-DNA. In Ajellomyces capsulatus (strain G186AR / H82 / ATCC MYA-2454 / RMSCC 2432) (Darling's disease fungus), this protein is Structure-specific endonuclease subunit SLX4.